The primary structure comprises 614 residues: Probable zinc transporter protein DDB_G0269332 (614 aa).

2 disordered regions span residues 1-103 and 115-178; these read MSDI…LPHL and SSYN…NNEF. Residues 1 to 203 are Cytoplasmic-facing; it reads MSDINSNSYD…NLNRDSDAKK (203 aa). A compositionally biased stretch (low complexity) spans 17–64; it reads QHQQESQYHPQQQQQQQQQQQQQQEYYNQQHQQESQYQQQSPPQQQYD. Over residues 80–92 the composition is skewed to basic residues; sequence GHGRSHNSGHGHS. Residues 121–176 show a composition bias toward low complexity; that stretch reads NNSGDISNSNNNNNNNNQYNYNNNNNNNNYNNNINNNQFNSSVYNNNNNNNNNNNN. The helical transmembrane segment at 204-224 threads the bilayer; it reads LAAWISVMLVFTIYEIFYGAY. Residues 225 to 233 are Extracellular-facing; that stretch reads LESLGLVSD. Residues 234-254 form a helical membrane-spanning segment; the sequence is GFHALFDCIGMGIALLAMLVG. At 255 to 270 the chain is on the cytoplasmic side; the sequence is KRGISNQEYTYGYDRW. The chain crosses the membrane as a helical span at residues 271-291; the sequence is EVLGTFSNGCFLLFVSFFLFL. Residues 292 to 306 are Extracellular-facing; the sequence is ESIERLLEPPHIHNH. Residues 307-327 form a helical membrane-spanning segment; it reads GRVMSLATISLIINIVGVLFF. Topologically, residues 328–351 are cytoplasmic; that stretch reads KQKSNERKQQSSIRSENLLTISHH. The helical transmembrane segment at 352-372 threads the bilayer; the sequence is ILVDSCTSLGVILSSLVGQAF. Residues 373 to 377 lie on the Extracellular side of the membrane; sequence GLEIS. Residues 378–398 traverse the membrane as a helical segment; sequence DSLISIIIACIIVYNALPICI. Residues 399–614 lie on the Cytoplasmic side of the membrane; sequence KTSAILLQTT…NSSHSHAHNH (216 aa). A disordered region spans residues 483–614; sequence EGKHNSHSHG…NSSHSHAHNH (132 aa). 2 stretches are compositionally biased toward basic residues: residues 487 to 499 and 507 to 523; these read NSHS…HHPH and SHNH…HGHS. Over residues 525-535 the composition is skewed to basic and acidic residues; it reads GGNDDHEHGEN. The segment covering 548-567 has biased composition (polar residues); the sequence is VQPTSPFSSHYTDIHSNNTP. Residues 575–585 show a composition bias toward acidic residues; the sequence is QDDEDDEDDYD. The segment covering 586–599 has biased composition (basic and acidic residues); sequence HDEHHHDHDHDEHH. Basic residues predominate over residues 600 to 614; sequence HGHSHNSSHSHAHNH.

The protein belongs to the cation diffusion facilitator (CDF) transporter (TC 2.A.4) family. SLC30A subfamily.

It localises to the membrane. May be involved in zinc transport from the cytoplasm to either intracellular organelles or extracellular spaces. This Dictyostelium discoideum (Social amoeba) protein is Probable zinc transporter protein DDB_G0269332.